A 227-amino-acid polypeptide reads, in one-letter code: Ribosomal RNA small subunit methyltransferase G (227 aa).

Residues Gly-74, Leu-79, Ala-124–Glu-125, and Arg-142 contribute to the S-adenosyl-L-methionine site.

The protein belongs to the methyltransferase superfamily. RNA methyltransferase RsmG family.

The protein localises to the cytoplasm. Its function is as follows. Specifically methylates the N7 position of guanine in position 518 of 16S rRNA. This chain is Ribosomal RNA small subunit methyltransferase G, found in Mycolicibacterium vanbaalenii (strain DSM 7251 / JCM 13017 / BCRC 16820 / KCTC 9966 / NRRL B-24157 / PYR-1) (Mycobacterium vanbaalenii).